The following is a 526-amino-acid chain: MSGNKVEVDKRRTFAIISHPDAGKTTITEKVLLFGNALQKAGTVKGKKSGQHAKSDWMEMEKDRGISITTSVMQFPYGGALINLLDTPGHEDFSEDTYRTLTAVDSCLMVIDSAKGVEDRTIKLMEVTRLRDTPIVTFMNKCDRDIRDPIELMDEVEDILKIACAPITWPIGSGKEFKGVYHILRDEIILYQSGMGHTIQEERIIKGLHNPELDKVLGSYANEIRDEMELVAGASNEFNQEAFLKGELTPVYFGTALGNFGVDHILDGIVEWAPKPLPRESDVRNVTPDEEKFSGFIFKIQANMDPKHRDRVAFMRVCSGRYEQGMKMHHVRIGKDVNVSDALTFMAGDRSRAEAAYPGDIIGLHNHGTMRIGDTFTQGEKLRFTGVPNFAPEMFRRIRLKDPLKQKQLLKGLVQLSEEGAVQVFRPIDSNDLIVGAVGVLQFEVVVGRLKSEYNVEAIYEGISVSTARWVYCKDERKLEEFRRKCSQNLALDGGNNLTYIAPTMVNLNLSMERYPDVEFAKTREH.

The region spanning 9–277 is the tr-type G domain; sequence DKRRTFAIIS…GIVEWAPKPL (269 aa). Residues 18 to 25, 86 to 90, and 140 to 143 contribute to the GTP site; these read SHPDAGKT, DTPGH, and NKCD.

This sequence belongs to the TRAFAC class translation factor GTPase superfamily. Classic translation factor GTPase family. PrfC subfamily.

Its subcellular location is the cytoplasm. Functionally, increases the formation of ribosomal termination complexes and stimulates activities of RF-1 and RF-2. It binds guanine nucleotides and has strong preference for UGA stop codons. It may interact directly with the ribosome. The stimulation of RF-1 and RF-2 is significantly reduced by GTP and GDP, but not by GMP. The protein is Peptide chain release factor 3 of Shewanella frigidimarina (strain NCIMB 400).